Reading from the N-terminus, the 955-residue chain is Glycine dehydrogenase (decarboxylating) (955 aa).

Position 705 is an N6-(pyridoxal phosphate)lysine (Lys-705).

It belongs to the GcvP family. As to quaternary structure, the glycine cleavage system is composed of four proteins: P, T, L and H. Requires pyridoxal 5'-phosphate as cofactor.

The catalysed reaction is N(6)-[(R)-lipoyl]-L-lysyl-[glycine-cleavage complex H protein] + glycine + H(+) = N(6)-[(R)-S(8)-aminomethyldihydrolipoyl]-L-lysyl-[glycine-cleavage complex H protein] + CO2. Functionally, the glycine cleavage system catalyzes the degradation of glycine. The P protein binds the alpha-amino group of glycine through its pyridoxal phosphate cofactor; CO(2) is released and the remaining methylamine moiety is then transferred to the lipoamide cofactor of the H protein. This chain is Glycine dehydrogenase (decarboxylating), found in Aliivibrio salmonicida (strain LFI1238) (Vibrio salmonicida (strain LFI1238)).